Reading from the N-terminus, the 269-residue chain is Ribosomal RNA small subunit methyltransferase J (269 aa).

S-adenosyl-L-methionine is bound by residues 125–126 (ER) and aspartate 179.

Belongs to the methyltransferase superfamily. RsmJ family.

Its subcellular location is the cytoplasm. The catalysed reaction is guanosine(1516) in 16S rRNA + S-adenosyl-L-methionine = N(2)-methylguanosine(1516) in 16S rRNA + S-adenosyl-L-homocysteine + H(+). Its function is as follows. Specifically methylates the guanosine in position 1516 of 16S rRNA. The protein is Ribosomal RNA small subunit methyltransferase J of Pseudomonas syringae pv. syringae (strain B728a).